Reading from the N-terminus, the 351-residue chain is Photosystem II D2 protein (351 aa).

A helical transmembrane segment spans residues 39-59 (TAYLAIGGWLTGTTFVTSWYT). Position 116 (His116) interacts with chlorophyll a. A helical membrane pass occupies residues 123-139 (GFMLRQFEIARLVGIRP). 2 residues coordinate pheophytin a: Gln128 and Asn141. A helical transmembrane segment spans residues 151–164 (VFVSVFLMYPLGQS). Position 196 (His196) interacts with chlorophyll a. Residues 206–226 (GALLCAIHGATVENTLFEDGE) traverse the membrane as a helical segment. A plastoquinone-binding residues include His213 and Phe260. Fe cation is bound at residue His213. Position 267 (His267) interacts with Fe cation. A helical membrane pass occupies residues 277–293 (GLWTSSIGIIGLALNLR).

It belongs to the reaction center PufL/M/PsbA/D family. In terms of assembly, PSII is composed of 1 copy each of membrane proteins PsbA, PsbB, PsbC, PsbD, PsbE, PsbF, PsbH, PsbI, PsbJ, PsbK, PsbL, PsbM, PsbT, PsbX, PsbY, PsbZ, Psb30/Ycf12, peripheral proteins PsbO, CyanoQ (PsbQ), PsbU, PsbV and a large number of cofactors. It forms dimeric complexes. The cofactor is The D1/D2 heterodimer binds P680, chlorophylls that are the primary electron donor of PSII, and subsequent electron acceptors. It shares a non-heme iron and each subunit binds pheophytin, quinone, additional chlorophylls, carotenoids and lipids. There is also a Cl(-1) ion associated with D1 and D2, which is required for oxygen evolution. The PSII complex binds additional chlorophylls, carotenoids and specific lipids..

It localises to the cellular thylakoid membrane. The enzyme catalyses 2 a plastoquinone + 4 hnu + 2 H2O = 2 a plastoquinol + O2. Photosystem II (PSII) is a light-driven water:plastoquinone oxidoreductase that uses light energy to abstract electrons from H(2)O, generating O(2) and a proton gradient subsequently used for ATP formation. It consists of a core antenna complex that captures photons, and an electron transfer chain that converts photonic excitation into a charge separation. The D1/D2 (PsbA/PsbD) reaction center heterodimer binds P680, the primary electron donor of PSII as well as several subsequent electron acceptors. D2 is needed for assembly of a stable PSII complex. The chain is Photosystem II D2 protein from Synechococcus sp. (strain WH7803).